A 523-amino-acid polypeptide reads, in one-letter code: Mitochondrial distribution and morphology protein 34 (523 aa).

Positions 1 to 200 (MSFKVNWKSL…LPTLIHQFSL (200 aa)) constitute an SMP-LTD domain. The segment at 489-523 (ELSMDRSGKRKQRNYGSATYESENPIVAPPPPYSH) is disordered.

Belongs to the MDM34 family. Component of the ER-mitochondria encounter structure (ERMES) or MDM complex, composed of MMM1, MDM10, MDM12 and MDM34.

Its subcellular location is the mitochondrion outer membrane. In terms of biological role, component of the ERMES/MDM complex, which serves as a molecular tether to connect the endoplasmic reticulum (ER) and mitochondria. Components of this complex are involved in the control of mitochondrial shape and protein biogenesis, and function in nonvesicular lipid trafficking between the ER and mitochondria. MDM34 is required for the interaction of the ER-resident membrane protein MMM1 and the outer mitochondrial membrane-resident beta-barrel protein MDM10. The sequence is that of Mitochondrial distribution and morphology protein 34 from Scheffersomyces stipitis (strain ATCC 58785 / CBS 6054 / NBRC 10063 / NRRL Y-11545) (Yeast).